The following is a 635-amino-acid chain: 1-deoxy-D-xylulose-5-phosphate synthase (635 aa).

Residues His-79 and 120–122 (GHS) each bind thiamine diphosphate. Asp-151 contributes to the Mg(2+) binding site. Thiamine diphosphate is bound by residues 152–153 (GA), Asn-182, Tyr-291, and Glu-372. Asn-182 is a Mg(2+) binding site.

This sequence belongs to the transketolase family. DXPS subfamily. Homodimer. The cofactor is Mg(2+). Thiamine diphosphate serves as cofactor.

It catalyses the reaction D-glyceraldehyde 3-phosphate + pyruvate + H(+) = 1-deoxy-D-xylulose 5-phosphate + CO2. The protein operates within metabolic intermediate biosynthesis; 1-deoxy-D-xylulose 5-phosphate biosynthesis; 1-deoxy-D-xylulose 5-phosphate from D-glyceraldehyde 3-phosphate and pyruvate: step 1/1. In terms of biological role, catalyzes the acyloin condensation reaction between C atoms 2 and 3 of pyruvate and glyceraldehyde 3-phosphate to yield 1-deoxy-D-xylulose-5-phosphate (DXP). In Xylella fastidiosa (strain M12), this protein is 1-deoxy-D-xylulose-5-phosphate synthase.